A 628-amino-acid polypeptide reads, in one-letter code: Growth hormone receptor (628 aa).

An N-terminal signal peptide occupies residues 1-18 (MDLWQLLLTLAVVGSSNA). Over 19–266 (FVGREAVTVT…FTCEEEFQFP (248 aa)) the chain is Extracellular. N-linked (GlcNAc...) asparagine glycosylation is found at Asn-33, Asn-40, and Asn-46. Disulfide bonds link Cys-56–Cys-66 and Cys-101–Cys-112. The N-linked (GlcNAc...) asparagine glycan is linked to Asn-115. Residues Cys-126 and Cys-140 are joined by a disulfide bond. A Fibronectin type-III domain is found at 151 to 254 (PPTGLNWTLM…EILYITLPQS (104 aa)). Asn-156, Asn-161, and Asn-200 each carry an N-linked (GlcNAc...) asparagine glycan. Positions 240–244 (YGEFS) match the WSXWS motif motif. A helical membrane pass occupies residues 267–287 (WFLIMIFGIFGLTVMLLVVMF). Residues 288–628 (SKQQRIKMLI…STDQLNKIML (341 aa)) are Cytoplasmic-facing. Positions 294–379 (KMLILPPVPV…HQKSLNILGA (86 aa)) are required for JAK2 binding. Residues 297 to 305 (ILPPVPVPK) carry the Box 1 motif motif. The UbE motif signature appears at 340–349 (DSWVEFIELD). Ser-341 carries the post-translational modification Phosphoserine. Residues Tyr-483 and Tyr-585 each carry the phosphotyrosine modification.

This sequence belongs to the type I cytokine receptor family. Type 1 subfamily. On growth hormone (GH) binding, forms homodimers and binds JAK2 via a box 1-containing domain. The soluble form (GHBP) is produced by phorbol ester-promoted proteolytic cleavage at the cell surface (shedding) by ADAM17/TACE. Shedding is inhibited by growth hormone (GH) binding to the receptor probably due to a conformational change in GHR rendering the receptor inaccessible to ADAM17. In terms of processing, on GH binding, phosphorylated on tyrosine residues in the cytoplasmic domain by JAK2. Post-translationally, ubiquitinated by the ECS(SOCS2) complex following ligand-binding and phosphorylation by JAK2, leading to its degradation by the proteasome. Regulation by the ECS(SOCS2) complex acts as a negative feedback loop of growth hormone receptor signaling. Ubiquitination is not sufficient for GHR internalization.

The protein resides in the cell membrane. The protein localises to the secreted. Functionally, receptor for pituitary gland growth hormone (GH1) involved in regulating postnatal body growth. On ligand binding, couples to the JAK2/STAT5 pathway. Its function is as follows. The soluble form (GHBP) acts as a reservoir of growth hormone in plasma and may be a modulator/inhibitor of GH signaling. The chain is Growth hormone receptor (GHR) from Cavia porcellus (Guinea pig).